Reading from the N-terminus, the 259-residue chain is Methionine aminopeptidase (259 aa).

Histidine 78 provides a ligand contact to substrate. Residues aspartate 95, aspartate 106, and histidine 169 each coordinate a divalent metal cation. Histidine 176 is a substrate binding site. An a divalent metal cation-binding site is contributed by glutamate 202. Tryptophan 220 provides a ligand contact to substrate. An a divalent metal cation-binding site is contributed by glutamate 234.

This sequence belongs to the peptidase M24A family. Methionine aminopeptidase type 1 subfamily. As to quaternary structure, monomer. It depends on Co(2+) as a cofactor. Zn(2+) serves as cofactor. Requires Mn(2+) as cofactor. Fe(2+) is required as a cofactor.

It carries out the reaction Release of N-terminal amino acids, preferentially methionine, from peptides and arylamides.. Its function is as follows. Removes the N-terminal methionine from nascent proteins. The N-terminal methionine is often cleaved when the second residue in the primary sequence is small and uncharged (Met-Ala-, Cys, Gly, Pro, Ser, Thr, or Val). Requires deformylation of the N(alpha)-formylated initiator methionine before it can be hydrolyzed. The sequence is that of Methionine aminopeptidase from Rickettsia prowazekii (strain Madrid E).